Here is a 1087-residue protein sequence, read N- to C-terminus: Transcription factor AP2-Z (1087 aa).

Residues 586–682 (GRVYKVIVRG…IKYNSVPDSL (97 aa)) constitute a DNA-binding region (AP2).

It belongs to the AP2/ERF transcription factor family. AP2 subfamily.

It localises to the nucleus. Its subcellular location is the chromosome. In terms of biological role, transcription factor which binds the 5'-[TC][AC]TG[AT]AC[AG]-3' motif. During the mosquito vector stage, plays an essential role in the zygote for de novo transcription of genes required for ookinete formation. This is Transcription factor AP2-Z from Plasmodium berghei (strain Anka).